The chain runs to 639 residues: Chaperone protein DnaK (639 aa).

T198 bears the Phosphothreonine; by autocatalysis mark. The segment at Q602 to K639 is disordered. A compositionally biased stretch (acidic residues) spans D625–K639.

This sequence belongs to the heat shock protein 70 family.

In terms of biological role, acts as a chaperone. This is Chaperone protein DnaK from Shewanella baltica (strain OS155 / ATCC BAA-1091).